Reading from the N-terminus, the 304-residue chain is Oxygen-dependent coproporphyrinogen-III oxidase (304 aa).

Serine 93 contributes to the substrate binding site. Residues histidine 97 and histidine 107 each coordinate a divalent metal cation. Histidine 107 acts as the Proton donor in catalysis. 109–111 (NVR) contributes to the substrate binding site. The a divalent metal cation site is built by histidine 146 and histidine 176. An important for dimerization region spans residues 241–276 (YVEFNLVYDRGTLFGLQSGGRTESILMSLPPQVRWA). 259–261 (GGR) lines the substrate pocket.

It belongs to the aerobic coproporphyrinogen-III oxidase family. Homodimer. A divalent metal cation serves as cofactor.

It is found in the cytoplasm. The enzyme catalyses coproporphyrinogen III + O2 + 2 H(+) = protoporphyrinogen IX + 2 CO2 + 2 H2O. Its pathway is porphyrin-containing compound metabolism; protoporphyrin-IX biosynthesis; protoporphyrinogen-IX from coproporphyrinogen-III (O2 route): step 1/1. Its function is as follows. Involved in the heme biosynthesis. Catalyzes the aerobic oxidative decarboxylation of propionate groups of rings A and B of coproporphyrinogen-III to yield the vinyl groups in protoporphyrinogen-IX. The polypeptide is Oxygen-dependent coproporphyrinogen-III oxidase (Pseudomonas fluorescens (strain Pf0-1)).